The chain runs to 430 residues: Glucose-6-phosphate isomerase (430 aa).

The Proton donor role is filled by E284. Residues H305 and K420 contribute to the active site.

This sequence belongs to the GPI family.

Its subcellular location is the cytoplasm. The enzyme catalyses alpha-D-glucose 6-phosphate = beta-D-fructose 6-phosphate. Its pathway is carbohydrate biosynthesis; gluconeogenesis. It functions in the pathway carbohydrate degradation; glycolysis; D-glyceraldehyde 3-phosphate and glycerone phosphate from D-glucose: step 2/4. Catalyzes the reversible isomerization of glucose-6-phosphate to fructose-6-phosphate. The sequence is that of Glucose-6-phosphate isomerase from Mycoplasmopsis synoviae (strain 53) (Mycoplasma synoviae).